The primary structure comprises 455 residues: 5'-nucleotidase domain-containing protein 1 (455 aa).

Residue D16 is the Nucleophile of the active site. The Mg(2+) site is built by D16 and D18. The active-site Proton donor is D18. N6-acetyllysine is present on K171. D313 is a Mg(2+) binding site. Residues 339–364 (GDEGTRSQRPEESEPLEKKGKYEGPK) are compositionally biased toward basic and acidic residues. Residues 339-368 (GDEGTRSQRPEESEPLEKKGKYEGPKAKPL) are disordered.

The protein belongs to the 5'(3')-deoxyribonucleotidase family.

This chain is 5'-nucleotidase domain-containing protein 1 (NT5DC1), found in Homo sapiens (Human).